The following is a 491-amino-acid chain: MNNNIYEDISKRTQGDIYIGVVGPVRTGKSTFIRKFMEKLVIPNIDNEFKKDRTRDEIPQSGSGKTIMTVEPKFVPADGVEIKIKDTVSLKVRMVDCVGYIVEGALGHEEGGKQRLVSTPWSQEAMTFEKAAEIGTKKVIKDHSTIGIVVLTDGSVTGIDRKSYVEPEERVIQELKNLKKPFAVVLNTLSPKSEETSMLRSELEEKYEVPVLPMNVVEMEEEDIEEVMEAVLYDFPLTEIRINLPKWVEGLERNHWIKSSIITTLKQSIIDIGKIRDIEGIIQGFSELEFLEDTGVDNVELGEGVINIDLQTKQDLFYNVLEEKSGFKIEGDYQLLSLITRLSKVKNEYDKIESALIDAKIKGYGVVAPSLEELSLEEPEIMKQGKQYGIKLKANAPSLHIIKADISTEVSPIVGNQNQGEEMIKYLMEVFEEQPADLWESNMFGKSLHDLVKEQLQSKLYTMPEEIRVKMQKTLQKIVNEGSSNIITILL.

Positions 23 to 30 match the Walker A motif; involved in ATP-binding motif; it reads GPVRTGKS. 23–30 is an ATP binding site; it reads GPVRTGKS. The stretch at 334 to 362 forms a coiled coil; that stretch reads QLLSLITRLSKVKNEYDKIESALIDAKIK.

As to quaternary structure, interacts (via Walker A motif) with SipL (via C-terminus LysM domain).

It is found in the cytoplasm. It carries out the reaction ATP + H2O = ADP + phosphate + H(+). Its function is as follows. ATPase. Has a role at an early stage in the morphogenesis of the spore coat and is required for proper coat localization to the forespore. In Clostridioides difficile (strain 630) (Peptoclostridium difficile), this protein is Stage IV sporulation protein A.